A 22-amino-acid polypeptide reads, in one-letter code: Brevinin-1OKa (22 aa).

At Lys22 the chain carries Lysine amide.

As to expression, expressed by the skin glands.

The protein resides in the secreted. Its function is as follows. Antimicrobial peptide. Active against Gram-negative bacterium E.coli (MIC=12.5 uM) and against Gram-positive bacterium S.aureus (MIC=12.5 uM). This is Brevinin-1OKa from Nidirana okinavana (Kampira Falls frog).